We begin with the raw amino-acid sequence, 1240 residues long: DNA excision repair protein ERCC-6-like (1240 aa).

Ser-14 bears the Phosphoserine mark. The TPR 1 repeat unit spans residues 21-54; the sequence is YLRYVQEAKEAAKNGDLEESLKLFNLAKDIFPTK. The Helicase ATP-binding domain occupies 110-278; sequence SLYKDGRKGG…WSLFDFACQG (169 aa). 123-130 provides a ligand contact to ATP; the sequence is DDMGLGKT. Positions 229–232 match the DEAH box motif; the sequence is DEAH. The Helicase C-terminal domain occupies 467–631; it reads FLMSLLERLQ…FTKQELKELF (165 aa). A disordered region spans residues 736-760; it reads FPSQQKKKGTEFNKPQPQPSRLLTK. A compositionally biased stretch (polar residues) spans 748 to 760; it reads NKPQPQPSRLLTK. A phosphoserine mark is found at Ser-755 and Ser-773. The segment at 778–813 is disordered; that stretch reads DQSAESEPQEHSEVHDVTSLQGSHHFNSTSDAGTIA. The segment covering 795-809 has biased composition (polar residues); it reads TSLQGSHHFNSTSDA. Ser-821 bears the Phosphoserine mark. Residues 845–879 form a disordered region; the sequence is QKKGLQASPGQEAPSENLGSFHYLPRESSKASLGP. Phosphoserine occurs at positions 966, 998, 1001, and 1021. The interval 974-1085 is disordered; that stretch reads KEKSLQSPAA…EVNTSLHSRR (112 aa). Polar residues predominate over residues 978–998; that stretch reads LQSPAANSRAKSALTLSLDSS. Positions 1049 to 1065 are enriched in polar residues; that stretch reads SVKQFDASTPQSGSNPS. Position 1057 is a phosphothreonine (Thr-1057). Phosphoserine is present on residues Ser-1092 and Ser-1112. A compositionally biased stretch (acidic residues) spans 1104 to 1117; sequence MEERLDNSSEEESE. The disordered stretch occupies residues 1104 to 1185; it reads MEERLDNSSE…MPDPPQDLAV (82 aa). Polar residues predominate over residues 1135–1165; the sequence is EQPSGATLASGNKSSNLTMSEPTSPAPQSSP. The residue at position 1172 (Ser-1172) is a Phosphoserine. Residues 1191–1224 form a TPR 2 repeat; sequence YESLVARGKELKECGKIQEALNCLVKALDIKSAD.

Belongs to the SNF2/RAD54 helicase family. Interacts with PLK1, which phosphorylates it. Both proteins are mutually dependent on each other for correct subcellular localization. Interacts (via N-terminal TPR repeat) with BEND3 (via BEN domains 1 and 3); the interaction is direct. Post-translationally, phosphorylation by PLK1 prevents the association with chromosome arms and restricts its localization to the kinetochore-centromere region. In terms of tissue distribution, expressed mainly in the neural tube and heart of 10.5 dpc embryo. Significantly down-regulated after alcohol exposure in embryonic brain and heart, but not in embryonic kidney, liver, or lung.

The protein resides in the chromosome. It localises to the centromere. The protein localises to the kinetochore. It catalyses the reaction ATP + H2O = ADP + phosphate + H(+). Functionally, DNA helicase that acts as a tension sensor that associates with catenated DNA which is stretched under tension until it is resolved during anaphase. Functions as ATP-dependent DNA translocase. Can promote Holliday junction branch migration (in vitro). The polypeptide is DNA excision repair protein ERCC-6-like (Ercc6l) (Mus musculus (Mouse)).